We begin with the raw amino-acid sequence, 202 residues long: Small ribosomal subunit protein uS4 (202 aa).

Positions 94–157 constitute an S4 RNA-binding domain; sequence SRLDNLVYRM…KDLPIVAAGA (64 aa).

Belongs to the universal ribosomal protein uS4 family. Part of the 30S ribosomal subunit. Contacts protein S5. The interaction surface between S4 and S5 is involved in control of translational fidelity.

Functionally, one of the primary rRNA binding proteins, it binds directly to 16S rRNA where it nucleates assembly of the body of the 30S subunit. With S5 and S12 plays an important role in translational accuracy. This is Small ribosomal subunit protein uS4 from Malacoplasma penetrans (strain HF-2) (Mycoplasma penetrans).